The sequence spans 447 residues: tRNA modification GTPase MnmE (447 aa).

(6S)-5-formyl-5,6,7,8-tetrahydrofolate contacts are provided by R22, E81, and K121. In terms of domain architecture, TrmE-type G spans 217–373 (GIVLAITGET…LMSEIVSYAE (157 aa)). N227 contributes to the K(+) binding site. GTP contacts are provided by residues 227 to 232 (NTGKSS), 246 to 252 (SDIPGTT), and 271 to 274 (DTAG). S231 is a binding site for Mg(2+). Residues S246, I248, and T251 each coordinate K(+). T252 is a binding site for Mg(2+). K447 is a binding site for (6S)-5-formyl-5,6,7,8-tetrahydrofolate.

Belongs to the TRAFAC class TrmE-Era-EngA-EngB-Septin-like GTPase superfamily. TrmE GTPase family. As to quaternary structure, homodimer. Heterotetramer of two MnmE and two MnmG subunits. K(+) serves as cofactor.

The protein resides in the cytoplasm. Functionally, exhibits a very high intrinsic GTPase hydrolysis rate. Involved in the addition of a carboxymethylaminomethyl (cmnm) group at the wobble position (U34) of certain tRNAs, forming tRNA-cmnm(5)s(2)U34. The chain is tRNA modification GTPase MnmE from Orientia tsutsugamushi (strain Boryong) (Rickettsia tsutsugamushi).